An 80-amino-acid polypeptide reads, in one-letter code: Teretoxin Tan6.1 (80 aa).

The N-terminal stretch at 1 to 21 (MATSGRLLCLCLVLGLVFESL) is a signal peptide. A propeptide spanning residues 22–34 (GHPGARLPKDGKR) is cleaved from the precursor.

It belongs to the teretoxin M (TM) superfamily. In terms of processing, contains 3 disulfide bonds. As to expression, expressed by the venom duct.

The protein localises to the secreted. The sequence is that of Teretoxin Tan6.1 from Terebra anilis (Auger snail).